Consider the following 289-residue polypeptide: Acetylglutamate kinase (289 aa).

Substrate-binding positions include 65–66 (GG), arginine 87, and asparagine 187.

Belongs to the acetylglutamate kinase family. ArgB subfamily.

The protein localises to the cytoplasm. The catalysed reaction is N-acetyl-L-glutamate + ATP = N-acetyl-L-glutamyl 5-phosphate + ADP. The protein operates within amino-acid biosynthesis; L-arginine biosynthesis; N(2)-acetyl-L-ornithine from L-glutamate: step 2/4. In terms of biological role, catalyzes the ATP-dependent phosphorylation of N-acetyl-L-glutamate. This Chromobacterium violaceum (strain ATCC 12472 / DSM 30191 / JCM 1249 / CCUG 213 / NBRC 12614 / NCIMB 9131 / NCTC 9757 / MK) protein is Acetylglutamate kinase.